We begin with the raw amino-acid sequence, 260 residues long: Methylesterase 7 (260 aa).

Residue Ser-84 is the Acyl-ester intermediate of the active site. Active-site charge relay system residues include Asp-210 and His-238.

Belongs to the AB hydrolase superfamily. Methylesterase family.

The catalysed reaction is methyl (indol-3-yl)acetate + H2O = (indol-3-yl)acetate + methanol + H(+). It catalyses the reaction methyl salicylate + H2O = salicylate + methanol + H(+). Its pathway is plant hormone biosynthesis. Its activity is regulated as follows. Esterase activity is down-regulated by salicylic acid (SA). In terms of biological role, methylesterase shown to have carboxylesterase activity, methyl indole-3-acetic acid (MeIAA) esterase activity and methyl salicylate (MeSA) esterase activity in vitro. Required to convert methyl salicylate (MeSA) to salicylic acid (SA) as part of the signal transduction pathways that activate systemic acquired resistance in systemic tissue. MeSA is believed to be an inactive form that needs to be demethylated to exert a biological effect. The polypeptide is Methylesterase 7 (Arabidopsis thaliana (Mouse-ear cress)).